Consider the following 119-residue polypeptide: Large ribosomal subunit protein bL19 (119 aa).

It belongs to the bacterial ribosomal protein bL19 family.

This protein is located at the 30S-50S ribosomal subunit interface and may play a role in the structure and function of the aminoacyl-tRNA binding site. This is Large ribosomal subunit protein bL19 from Saccharopolyspora erythraea (strain ATCC 11635 / DSM 40517 / JCM 4748 / NBRC 13426 / NCIMB 8594 / NRRL 2338).